The chain runs to 346 residues: Cobalt transport protein CbiM (346 aa).

Positions Met-1–Ala-25 are cleaved as a signal peptide. The next 8 membrane-spanning stretches (helical) occupy residues Gly-31–Leu-51, Pro-68–Pro-88, Ile-101–Ile-121, Thr-133–Phe-153, Leu-159–Tyr-179, Phe-196–Val-216, Ala-255–Ser-275, and Leu-312–Trp-332.

This sequence belongs to the CbiM family. As to quaternary structure, forms an energy-coupling factor (ECF) transporter complex composed of an ATP-binding protein (A component, CbiO), a transmembrane protein (T component, CbiQ) and 2 possible substrate-capture proteins (S components, CbiM and CbiN) of unknown stoichimetry.

The protein localises to the cell inner membrane. It participates in cofactor biosynthesis; adenosylcobalamin biosynthesis. Its function is as follows. Part of the energy-coupling factor (ECF) transporter complex CbiMNOQ involved in cobalt import. The chain is Cobalt transport protein CbiM from Geobacter sulfurreducens (strain ATCC 51573 / DSM 12127 / PCA).